The primary structure comprises 591 residues: Protein enabled homolog (591 aa).

The 111-residue stretch at 1-111 (MSEQSICQAR…SAMMHALEVL (111 aa)) folds into the WH1 domain. The segment covering 115–136 (ETGPTLPRQNSQLPAQVQNGPS) has biased composition (polar residues). Residues 115–146 (ETGPTLPRQNSQLPAQVQNGPSQEELEIQRRQ) form a disordered region. S125 is subject to Phosphoserine. The stretch at 135-265 (PSQEELEIQR…LEWERERRIS (131 aa)) forms a coiled coil. Tandem repeats lie at residues 156–160 (LERER), 161–165 (LERER), 166–170 (MERER), 171–175 (LERER), 176–180 (LERER), 181–185 (LERER), 186–190 (LEQEQ), 191–195 (LERER), and 196–200 (QERER). The tract at residues 156 to 200 (LERERLERERMERERLERERLERERLERERLEQEQLERERQERER) is 9 X 5 AA tandem repeats of [LMQ]-E-[QR]-E-[QR]. A compositionally biased stretch (basic and acidic residues) spans 221 to 264 (RLDRERQERQERERLERLERERQERERQEQLEREQLEWERERRI). Positions 221-379 (RLDRERQERQ…PPLPASGFFL (159 aa)) are disordered. S265 is subject to Phosphoserine; by PKA. Over residues 275-305 (TPLNSVLGDSSASEPGLQAASQPAETPSQQG) the composition is skewed to polar residues. Composition is skewed to pro residues over residues 311 to 323 (LAPP…PPGP) and 330 to 373 (LPPP…PPLP). Residues 391-411 (GLAAAIAGAKLRKVSRMEDTS) form an EVH2 block A region. An EVH2 region spans residues 391–588 (GLAAAIAGAK…DAIRQELSKS (198 aa)). Positions 400–403 (KLRK) match the KLKR motif. Residues 405-549 (SRMEDTSFPS…LSQPSANGVQ (145 aa)) form a disordered region. Over residues 432-443 (RGNGPLPLGGSG) the composition is skewed to gly residues. Residues 442–459 (SGLMEEMSALLARRRRIA) form an EVH2 block B region. A Phosphothreonine modification is found at I465. 2 positions are modified to phosphoserine: E471 and E475. 2 stretches are compositionally biased toward polar residues: residues 479–491 (PVTS…STPE) and 499–509 (RTNTMNGSKSP). Phosphothreonine is present on T502. Phosphoserine occurs at positions 506, 508, and 512. Over residues 538 to 549 (TPLSQPSANGVQ) the composition is skewed to polar residues. Residues 554-588 (DYDRLKQDILDEMRKELTKLKEELIDAIRQELSKS) form an EVH2 block C region. Residues 557 to 587 (RLKQDILDEMRKELTKLKEELIDAIRQELSK) are a coiled coil.

This sequence belongs to the Ena/VASP family. In terms of assembly, homotetramer. Interacts with APBB1IP, APBB1, PFN1 and ROBO4. Isoforms, containing the polyproline-rich regions with PPLP motifs, bind the WW domain of APBB1IP. Isoforms, containing the PPSY motif, bind, in vitro, to the WW2 and WW3 domains of NEDD4 and to the WW1 domain of YAP1. Binds the SH3 domain of BAIAP2-alpha but only after the autoinhibitory region of BAIAP2-alpha has been blocked by interaction with CDC42. Interacts, via the EVH1/WH1 domain, with the Pro-rich domains from VCL, ZYX and Listeria monocytogenes actA and with TES (via LIM domains). The TES LIM domain and the Pro-rich domains from VCL or ZYX compete for the same binding site. Interaction with ZYX is important for targeting ENAH to focal adhesions and enhances production of actin-rich structures at the apical surface of cells. Interacts, through the Pro-rich region, with the C-terminal SH3 domain of DNMPB. Binds GPHN. Interacts with FAT1 (via EVH1 domains). Heterotrimer with TES and ACTL7A. Interacts with PRPF40A. In terms of processing, NTN1-induced PKA phosphorylation on Ser-265 directly parallels the formation of filopodial protrusions. Expressed in myoepithelia of parotid, breast, bronchial glands and sweat glands. Expressed in colon-rectum muscolaris mucosae epithelium, pancreas acinar ductal epithelium, endometrium epithelium, prostate fibromuscolar stroma and placenta vascular media. Overexpressed in a majority of breast cancer cell lines and primary breast tumor lesions.

Its subcellular location is the cytoplasm. The protein localises to the cytoskeleton. It is found in the cell projection. The protein resides in the lamellipodium. It localises to the filopodium. Its subcellular location is the synapse. The protein localises to the cell junction. It is found in the focal adhesion. In terms of biological role, ena/VASP proteins are actin-associated proteins involved in a range of processes dependent on cytoskeleton remodeling and cell polarity such as axon guidance and lamellipodial and filopodial dynamics in migrating cells. ENAH induces the formation of F-actin rich outgrowths in fibroblasts. Acts synergistically with BAIAP2-alpha and downstream of NTN1 to promote filipodia formation. This is Protein enabled homolog (ENAH) from Homo sapiens (Human).